Consider the following 683-residue polypeptide: Protein kinase C eta type (683 aa).

The 118-residue stretch at 1–118 folds into the C2 domain; sequence MSSGTMKFNG…LRTAGTSDTF (118 aa). A phosphoserine mark is found at Ser28 and Ser32. 2 Phorbol-ester/DAG-type zinc fingers span residues 171 to 222 and 245 to 295; these read GHKF…VTAC and PHKF…APNC. Ser317 is subject to Phosphoserine. The region spanning 355-614 is the Protein kinase domain; that stretch reads FEFIRVLGKG…EHEILRHPFF (260 aa). ATP is bound by residues 361 to 369 and Lys384; that span reads LGKGSFGKV. Asp479 functions as the Proton acceptor in the catalytic mechanism. Thr513 bears the Phosphothreonine; by PDPK1 mark. The 69-residue stretch at 615–683 folds into the AGC-kinase C-terminal domain; sequence KEIDWVQLNH…FSYVSPELQP (69 aa). Thr656 bears the Phosphothreonine mark. Ser675 bears the Phosphoserine mark.

Belongs to the protein kinase superfamily. AGC Ser/Thr protein kinase family. PKC subfamily. Interacts with FYN. Interacts with RALA. Interacts with DGKQ.

Its subcellular location is the cytoplasm. The catalysed reaction is L-seryl-[protein] + ATP = O-phospho-L-seryl-[protein] + ADP + H(+). It catalyses the reaction L-threonyl-[protein] + ATP = O-phospho-L-threonyl-[protein] + ADP + H(+). With respect to regulation, novel PKCs (PRKCD, PRKCE, PRKCH and PRKCQ) are calcium-insensitive, but activated by diacylglycerol (DAG) and phosphatidylserine. Three specific sites; Thr-513 (activation loop of the kinase domain), Thr-656 (turn motif) and Ser-675 (hydrophobic region), need to be phosphorylated for its full activation. Calcium-independent, phospholipid- and diacylglycerol (DAG)-dependent serine/threonine-protein kinase that is involved in the regulation of cell differentiation in keratinocytes and pre-B cell receptor, mediates regulation of epithelial tight junction integrity and foam cell formation, and is required for glioblastoma proliferation and apoptosis prevention in MCF-7 cells. In keratinocytes, binds and activates the tyrosine kinase FYN, which in turn blocks epidermal growth factor receptor (EGFR) signaling and leads to keratinocyte growth arrest and differentiation. Associates with the cyclin CCNE1-CDK2-CDKN1B complex and inhibits CDK2 kinase activity, leading to RB1 dephosphorylation and thereby G1 arrest in keratinocytes. In association with RALA activates actin depolymerization, which is necessary for keratinocyte differentiation. In the pre-B cell receptor signaling, functions downstream of BLNK by up-regulating IRF4, which in turn activates L chain gene rearrangement. Regulates epithelial tight junctions (TJs) by phosphorylating occludin (OCLN) on threonine residues, which is necessary for the assembly and maintenance of TJs. In association with PLD2 and via TLR4 signaling, is involved in lipopolysaccharide (LPS)-induced RGS2 down-regulation and foam cell formation. Upon PMA stimulation, mediates glioblastoma cell proliferation by activating the mTOR pathway, the PI3K/AKT pathway and the ERK1-dependent phosphorylation of ELK1. Involved in the protection of glioblastoma cells from irradiation-induced apoptosis by preventing caspase-9 activation. In camptothecin-treated MCF-7 cells, regulates NF-kappa-B upstream signaling by activating IKBKB, and confers protection against DNA damage-induced apoptosis. Promotes oncogenic functions of ATF2 in the nucleus while blocking its apoptotic function at mitochondria. Phosphorylates ATF2 which promotes its nuclear retention and transcriptional activity and negatively regulates its mitochondrial localization. The chain is Protein kinase C eta type (Prkch) from Rattus norvegicus (Rat).